The following is a 935-amino-acid chain: Progesterone receptor (935 aa).

A disordered region spans residues 1-50 (MTELKAKGPRAPHVAGSPSSPKVGSPLPCSQAAGPFPGSQTSDTLPEASA). An AF3; mediates transcriptional activation region spans residues 1-164 (MTELKAKGPR…PATQRVLSPL (164 aa)). The tract at residues 1–568 (MTELKAKGPR…YSFESLPQKI (568 aa)) is modulating, Pro-Rich. S20 carries the phosphoserine modification. An LXXL motif 1 motif is present at residues 55–59 (LDGLL). The segment at 62–159 (RICQGQDPTD…DPPAAPATQR (98 aa)) is disordered. The residue at position 81 (S81) is a Phosphoserine. The LXXL motif 2 motif lies at 115-119 (LDTLW). Phosphoserine is present on residues S130 and S162. The mediates transcriptional transrepression stretch occupies residues 165–305 (MSRSGGKAGD…LATTVTDFIH (141 aa)). The short motif at 183–187 (KVLPR) is the Nuclear localization signal element. Positions 185–252 (LPRGLSPSRQ…ALGGAAAGGG (68 aa)) are disordered. S190 is modified (phosphoserine). Polar residues predominate over residues 191–203 (PSRQLLLPTSGSP). S213 bears the Phosphoserine mark. Residues 220–231 (EVEEEDGSESED) are compositionally biased toward acidic residues. Over residues 232-246 (SAGPLLKGKPRALGG) the composition is skewed to low complexity. At S294 the chain carries Phosphoserine; by MAPK1. The segment at 331 to 365 (GGAGAASAFAPPRSSPSASSTPVPGGDFPDCAYAP) is disordered. The segment covering 335 to 356 (AASAFAPPRSSPSASSTPVPGG) has biased composition (low complexity). S345 is subject to Phosphoserine; by MAPK. Residue K388 forms a Glycyl lysine isopeptide (Lys-Gly) (interchain with G-Cter in SUMO); alternate linkage. K388 participates in a covalent cross-link: Glycyl lysine isopeptide (Lys-Gly) (interchain with G-Cter in ubiquitin); alternate. S400 is subject to Phosphoserine; by CDK2. The segment at 415–452 (PDFPLGPPPSLPPRAPPPRPGEAAVTAAPASASVSSAS) is disordered. Over residues 418-434 (PLGPPPSLPPRAPPPRP) the composition is skewed to pro residues. Over residues 435–452 (GEAAVTAAPASASVSSAS) the composition is skewed to low complexity. Residues 456-548 (STLECILYKA…VYPPYLNYLR (93 aa)) are AF1; mediates transcriptional activation. A Glycyl lysine isopeptide (Lys-Gly) (interchain with G-Cter in SUMO) cross-link involves residue K533. 2 NR C4-type zinc fingers span residues 569–589 (CLIC…CGSC) and 605–629 (CAGR…LRKC). The nuclear receptor DNA-binding region spans 569 to 641 (CLICGDEASG…AGMVLGGRKF (73 aa)). S678 is subject to Phosphoserine. An NR LBD domain is found at 681–915 (QDIQLIPPLI…EFPEMMSEVI (235 aa)). Residues 689–935 (LINLLLSIEP…MVKPLLFHKK (247 aa)) are AF2; mediates transcriptional activation.

It belongs to the nuclear hormone receptor family. Interacts with SMARD1 and UNC45A. Interacts with CUEDC2; the interaction promotes ubiquitination, decreases sumoylation, and represses transcriptional activity. Interacts with PIAS3; the interaction promotes sumoylation of PR in a hormone-dependent manner, inhibits DNA-binding, and alters nuclear export. Interacts with SP1; the interaction requires ligand-induced phosphorylation on Ser-344 by ERK1/2-MAPK. Interacts with PRMT2. Interacts with NCOA2 and NCOA1. Interacts with KLF9. Interacts with GTF2B. Phosphorylated on multiple serine sites. Several of these sites are hormone-dependent. Phosphorylation on Ser-294 is highly hormone-dependent and modulates ubiquitination and sumoylation on Lys-388. Phosphorylation on Ser-345 requires induction by hormone. Basal phosphorylation on Ser-81, Ser-162, Ser-190 and Ser-400 is increased in response to progesterone and can be phosphorylated in vitro by the CDK2-A1 complex. Increased levels of phosphorylation on Ser-400 also in the presence of EGF, heregulin, IGF, PMA and FBS. Phosphorylation at this site by CDK2 is ligand-independent, and increases nuclear translocation and transcriptional activity. Phosphorylation at Ser-162 and Ser-294, but not at Ser-190, is impaired during the G(2)/M phase of the cell cycle. Phosphorylation on Ser-345 by ERK1/2 MAPK is required for interaction with SP1. Post-translationally, sumoylation is hormone-dependent and represses transcriptional activity. Sumoylation on all three sites is enhanced by PIAS3. Desumoylated by SENP1. Sumoylation on Lys-388, the main site of sumoylation, is repressed by ubiquitination on the same site, and modulated by phosphorylation at Ser-294. In terms of processing, ubiquitination is hormone-dependent and represses sumoylation on the same site. Promoted by MAPK-mediated phosphorylation on Ser-294. Palmitoylated by ZDHHC7 and ZDHHC21. Palmitoylation is required for plasma membrane targeting and for rapid intracellular signaling via ERK and AKT kinases and cAMP generation.

Its subcellular location is the nucleus. It localises to the cytoplasm. Functionally, the steroid hormones and their receptors are involved in the regulation of eukaryotic gene expression and affect cellular proliferation and differentiation in target tissues. Transcriptional activator of several progesteron-dependent promoters in a variety of cell types. Involved in activation of SRC-dependent MAPK signaling on hormone stimulation. The protein is Progesterone receptor (PGR) of Pithecia irrorata (Gray monk saki).